The chain runs to 344 residues: MTTIAVVGATGQVGQVMRTLLEERNFPADTVRFFASPRSAGRKIEFRGTEIEVEDITQATEESLKDIDVALFSAGGTASKQYAPLFAAAGATVVDNSSAWRKDDEVPLIVSEVNPSDKDSLVKGIIANPNCTTMAAMPVLKPLHDAAGLVKLHVSSYQAVSGSGLAGVETLAKQVAAVGDHNVEFVHDGQAADAGDVGPYVSPIAYNVLPFAGNLVDDGTFETDEEQKLRNESRKILGLPDLKVSGTCVRVPVFTGHTLTIHAEFDKAITVDQAQEILGAASGVKLVDVPTPLAAAGIDESLVGRIRQDSTVDDNRGLVLVVSGDNLRKGAALNTIQIAELLVK.

NADP(+) is bound by residues 10-13 (TGQV) and 38-39 (RS). Residue Arg101 coordinates phosphate. Cys131 serves as the catalytic Acyl-thioester intermediate. Position 158 (Gln158) interacts with substrate. 161–162 (SG) lines the NADP(+) pocket. Residue Lys228 participates in phosphate binding. A substrate-binding site is contributed by Arg250. Residue His257 is the Proton acceptor of the active site. Asn326 contacts NADP(+).

The protein belongs to the aspartate-semialdehyde dehydrogenase family. In terms of assembly, homodimer.

It catalyses the reaction L-aspartate 4-semialdehyde + phosphate + NADP(+) = 4-phospho-L-aspartate + NADPH + H(+). Its pathway is amino-acid biosynthesis; L-lysine biosynthesis via DAP pathway; (S)-tetrahydrodipicolinate from L-aspartate: step 2/4. It participates in amino-acid biosynthesis; L-methionine biosynthesis via de novo pathway; L-homoserine from L-aspartate: step 2/3. The protein operates within amino-acid biosynthesis; L-threonine biosynthesis; L-threonine from L-aspartate: step 2/5. Functionally, catalyzes the NADPH-dependent formation of L-aspartate-semialdehyde (L-ASA) by the reductive dephosphorylation of L-aspartyl-4-phosphate. The chain is Aspartate-semialdehyde dehydrogenase from Corynebacterium glutamicum (strain ATCC 13032 / DSM 20300 / JCM 1318 / BCRC 11384 / CCUG 27702 / LMG 3730 / NBRC 12168 / NCIMB 10025 / NRRL B-2784 / 534).